We begin with the raw amino-acid sequence, 728 residues long: Catalase-peroxidase (728 aa).

Positions 1–16 are cleaved as a signal peptide; it reads MDNPTDSAGKCPVAHG. A disordered region spans residues 1 to 26; it reads MDNPTDSAGKCPVAHGNTPRSRSNRD. Positions 96-218 form a cross-link, tryptophyl-tyrosyl-methioninium (Trp-Tyr) (with M-244); the sequence is WHSAGTYRIT…LGAVQMGFIY (123 aa). The Proton acceptor role is filled by His97. The segment at residues 218–244 is a cross-link (tryptophyl-tyrosyl-methioninium (Tyr-Met) (with W-96)); sequence YVNPEGPNGNSDPLASARDIRETFARM. His259 contributes to the heme b binding site.

This sequence belongs to the peroxidase family. Peroxidase/catalase subfamily. In terms of assembly, homodimer or homotetramer. Heme b serves as cofactor. In terms of processing, formation of the three residue Trp-Tyr-Met cross-link is important for the catalase, but not the peroxidase activity of the enzyme.

The enzyme catalyses H2O2 + AH2 = A + 2 H2O. It carries out the reaction 2 H2O2 = O2 + 2 H2O. Its function is as follows. Bifunctional enzyme with both catalase and broad-spectrum peroxidase activity. The sequence is that of Catalase-peroxidase from Rhizobium leguminosarum bv. phaseoli.